The sequence spans 249 residues: Methylthioribulose-1-phosphate dehydratase (249 aa).

Positions 1–25 (MVDIKPEQTQEGNNNDHLVQSDDPE) are disordered. A compositionally biased stretch (polar residues) spans 9–18 (TQEGNNNDHL). C105 lines the substrate pocket. The Zn(2+) site is built by H122 and H124. E151 acts as the Proton donor/acceptor in catalysis. H207 contacts Zn(2+).

The protein belongs to the aldolase class II family. MtnB subfamily. Zn(2+) serves as cofactor.

It localises to the cytoplasm. The catalysed reaction is 5-(methylsulfanyl)-D-ribulose 1-phosphate = 5-methylsulfanyl-2,3-dioxopentyl phosphate + H2O. The protein operates within amino-acid biosynthesis; L-methionine biosynthesis via salvage pathway; L-methionine from S-methyl-5-thio-alpha-D-ribose 1-phosphate: step 2/6. In terms of biological role, catalyzes the dehydration of methylthioribulose-1-phosphate (MTRu-1-P) into 2,3-diketo-5-methylthiopentyl-1-phosphate (DK-MTP-1-P). This chain is Methylthioribulose-1-phosphate dehydratase, found in Arthroderma otae (strain ATCC MYA-4605 / CBS 113480) (Microsporum canis).